A 159-amino-acid polypeptide reads, in one-letter code: uncharacterized protein (159 aa).

3 helical membrane passes run 10–30 (FLSMFFMAILFFPAFNASLFF), 52–72 (MLILCFGFMSFSFLNIHVILL), and 96–116 (LTLIFLLIAIVIAPLIAPFVT).

Its subcellular location is the membrane. This is an uncharacterized protein from Escherichia coli (strain K12).